Consider the following 290-residue polypeptide: uncharacterized protein (290 aa).

Transmembrane regions (helical) follow at residues 71 to 91 (FWSFSVLTTMIISCIIFVKNI), 124 to 144 (GILISSPFIVYQILLFVLPGM), 155 to 175 (IIIGSMILFLLGLIFGYYILV), 202 to 222 (FILVLLFGTALAFQLPVLQLV), 234 to 254 (MFSIWRYVILLSTVVGAVLTP), and 262 to 282 (ILLSSIILILYFGGASLVLVV).

This sequence belongs to the TatC family.

The protein localises to the plastid. Its subcellular location is the chloroplast membrane. This is an uncharacterized protein from Guillardia theta (Cryptophyte).